A 378-amino-acid chain; its full sequence is DNA replication and repair protein RecF (378 aa).

Position 30-37 (Gly-30–Thr-37) interacts with ATP.

It belongs to the RecF family.

It localises to the cytoplasm. The RecF protein is involved in DNA metabolism; it is required for DNA replication and normal SOS inducibility. RecF binds preferentially to single-stranded, linear DNA. It also seems to bind ATP. The chain is DNA replication and repair protein RecF from Frankia alni (strain DSM 45986 / CECT 9034 / ACN14a).